The primary structure comprises 430 residues: Enolase (430 aa).

Gln-163 is a binding site for (2R)-2-phosphoglycerate. Catalysis depends on Glu-205, which acts as the Proton donor. Residues Asp-242, Glu-287, and Asp-314 each contribute to the Mg(2+) site. Residues Lys-339, Arg-368, Ser-369, and Lys-390 each coordinate (2R)-2-phosphoglycerate. Residue Lys-339 is the Proton acceptor of the active site.

It belongs to the enolase family. Mg(2+) serves as cofactor.

The protein localises to the cytoplasm. It localises to the secreted. It is found in the cell surface. The catalysed reaction is (2R)-2-phosphoglycerate = phosphoenolpyruvate + H2O. Its pathway is carbohydrate degradation; glycolysis; pyruvate from D-glyceraldehyde 3-phosphate: step 4/5. Its function is as follows. Catalyzes the reversible conversion of 2-phosphoglycerate (2-PG) into phosphoenolpyruvate (PEP). It is essential for the degradation of carbohydrates via glycolysis. This chain is Enolase, found in Bacillus pumilus (strain SAFR-032).